Reading from the N-terminus, the 645-residue chain is Chaperone protein DnaK (645 aa).

T201 is modified (phosphothreonine; by autocatalysis). Low complexity predominate over residues 606 to 629 (NTNNATAGDNNTTDTGSSSNSDGS). The disordered stretch occupies residues 606–645 (NTNNATAGDNNTTDTGSSSNSDGSKVVDSDYQEIDKKDGK). The segment covering 630–645 (KVVDSDYQEIDKKDGK) has biased composition (basic and acidic residues).

Belongs to the heat shock protein 70 family.

Acts as a chaperone. The chain is Chaperone protein DnaK from Ehrlichia ruminantium (strain Gardel).